Consider the following 461-residue polypeptide: Photosystem II CP43 reaction center protein (461 aa).

The next 5 membrane-spanning stretches (helical) occupy residues 57–81 (LFEV…SHLA), 122–143 (LRGP…KDKN), 166–188 (KAMF…RIIS), 243–263 (KPFG…LSYS), and 279–300 (WYNN…ASQS). E355 serves as a coordination point for [CaMn4O5] cluster. Residues 435 to 459 (RARAAAAGFEKGIDRATEPVLAMRD) form a helical membrane-spanning segment.

This sequence belongs to the PsbB/PsbC family. PsbC subfamily. In terms of assembly, PSII is composed of 1 copy each of membrane proteins PsbA, PsbB, PsbC, PsbD, PsbE, PsbF, PsbH, PsbI, PsbJ, PsbK, PsbL, PsbM, PsbT, PsbX, PsbY, PsbZ, Psb30/Ycf12, peripheral proteins PsbO, CyanoQ (PsbQ), PsbU, PsbV and a large number of cofactors. It forms dimeric complexes. It depends on Binds multiple chlorophylls and provides some of the ligands for the Ca-4Mn-5O cluster of the oxygen-evolving complex. It may also provide a ligand for a Cl- that is required for oxygen evolution. PSII binds additional chlorophylls, carotenoids and specific lipids. as a cofactor.

It localises to the cellular thylakoid membrane. Its function is as follows. One of the components of the core complex of photosystem II (PSII). It binds chlorophyll and helps catalyze the primary light-induced photochemical processes of PSII. PSII is a light-driven water:plastoquinone oxidoreductase, using light energy to abstract electrons from H(2)O, generating O(2) and a proton gradient subsequently used for ATP formation. The sequence is that of Photosystem II CP43 reaction center protein from Synechococcus elongatus (strain ATCC 33912 / PCC 7942 / FACHB-805) (Anacystis nidulans R2).